The chain runs to 172 residues: ATP synthase subunit b (172 aa).

The helical transmembrane segment at 12–32 (VGFNAGTMLFQLVAMLILLAL) threads the bilayer.

The protein belongs to the ATPase B chain family. In terms of assembly, F-type ATPases have 2 components, F(1) - the catalytic core - and F(0) - the membrane proton channel. F(1) has five subunits: alpha(3), beta(3), gamma(1), delta(1), epsilon(1). F(0) has three main subunits: a(1), b(2) and c(10-14). The alpha and beta chains form an alternating ring which encloses part of the gamma chain. F(1) is attached to F(0) by a central stalk formed by the gamma and epsilon chains, while a peripheral stalk is formed by the delta and b chains.

The protein resides in the cell membrane. In terms of biological role, f(1)F(0) ATP synthase produces ATP from ADP in the presence of a proton or sodium gradient. F-type ATPases consist of two structural domains, F(1) containing the extramembraneous catalytic core and F(0) containing the membrane proton channel, linked together by a central stalk and a peripheral stalk. During catalysis, ATP synthesis in the catalytic domain of F(1) is coupled via a rotary mechanism of the central stalk subunits to proton translocation. Functionally, component of the F(0) channel, it forms part of the peripheral stalk, linking F(1) to F(0). The sequence is that of ATP synthase subunit b from Bacillus licheniformis (strain ATCC 14580 / DSM 13 / JCM 2505 / CCUG 7422 / NBRC 12200 / NCIMB 9375 / NCTC 10341 / NRRL NRS-1264 / Gibson 46).